Reading from the N-terminus, the 314-residue chain is MKPRKIILMGLRRSGKSSIQKVVFYKMPPNETLFLESTSKLTQDHISSFIDFSVWDFPGQVDVFDAAFDFESIFTQVGALIFVIDAQDDYLDALARLHVTVARVVTINPNICIEVFIHKVDGLSDEFKIDTQRDIQQRTQDELADIGLENVPISFHLTSIFDHSIFEAFSRVIQKLIPQLPTLENLLNIFCSNSLVEKAYLFDVLSKIYVATDSSPVDVQSYEICSDFIDVILDIGSIYGRSSQLKPGHSPEILDETSSVIRLSNDLVLFLREMNQYLALICIVRADNFEKSGLIEYNVQCLQTAIQSIFSPRT.

Residues serine 17, serine 18, serine 37, histidine 118, and aspartate 121 each coordinate GTP.

This sequence belongs to the GTR/RAG GTP-binding protein family.

The protein localises to the vacuole membrane. It localises to the cytoplasm. It is found in the nucleus. It catalyses the reaction GTP + H2O = GDP + phosphate + H(+). Its function is as follows. GTPase involved in activation of the TORC1 signaling pathway, which promotes growth and represses autophagy in nutrient-rich conditions. Also required for TORC1 inactivation during nitrogen starvation. The sequence is that of GTP-binding protein gtr2 (gtr2) from Schizosaccharomyces pombe (strain 972 / ATCC 24843) (Fission yeast).